Reading from the N-terminus, the 603-residue chain is MESDVIADLRCKLKETEEERRKAAQYGLQLVESQNELQNQLDKCRNEMMTLTESYEQEKYTLQREVELKSRMLESLSSECETIKQQQKMHLEQLEETLSRSHGQEVNELKKKLETLKAELDEARLSEKQLKHKVDHQEKLLSSKSKEMQMSERVHESVSSETLTLQIELTEMENVKTTLQEEVNELQYRQEQLELLNANLMRQVDRLKGEKEEREKEAVSYYDALEKARVVNQDLQVQLDQALQQALDPNSKGNSLFAEVEDRRAAMERQLISMKVKYQSLKKQNAFNREQMQRMKVQIATLLQMKGSQAEFEQQERLLAMLEQKNGEIKHLLGEIRNLEKFKSLYESMESKPSANSVALEDDTYYTDLLQIKLDNLNKESESIKGELSIQRMKALLESQRALDIERKLFLNERHLQLSQSENMKLRAKLDELKLKYEPEEKIEVPVLKKRREVLPVDISTPNGVCAPSAVGEEDYRLSPQKEEAQSCSDGSEDNNLQLEKTVSVSTSGVILSPYKSLTLDIQPRKEKKCVKLTGVPADLEALSERSRNTPNSPRLAAESRLQREVKQGKETASKLEKAACKKSYPTVYVSSKSTPETQCPQQ.

Position 1 is an N-acetylmethionine (Met-1). Positions 1-442 (MESDVIADLR…LKLKYEPEEK (442 aa)) form a coiled coil. 2 positions are modified to phosphoserine: Ser-513 and Ser-553. A disordered region spans residues 542-577 (ALSERSRNTPNSPRLAAESRLQREVKQGKETASKLE). A compositionally biased stretch (basic and acidic residues) spans 561 to 577 (RLQREVKQGKETASKLE).

This sequence belongs to the Spindly family. Interacts with KNTC1 and ZW10. These interactions appear weak and may be transient or indirect. Interacts with dynein intermediate chain and dynactin (DCTN1). Interacts with the catalytically active form of USP45. Post-translationally, monoubiquitinated with'Lys-48' linkage. Deubiquitinated by USP45.

The protein resides in the cytoplasm. The protein localises to the cytoskeleton. It is found in the microtubule organizing center. Its subcellular location is the centrosome. It localises to the chromosome. The protein resides in the centromere. The protein localises to the kinetochore. It is found in the nucleus. Its subcellular location is the spindle pole. Functionally, required for the localization of dynein and dynactin to the mitotic kintochore. Dynein is believed to control the initial lateral interaction between the kinetochore and spindle microtubules and to facilitate the subsequent formation of end-on kinetochore-microtubule attachments mediated by the NDC80 complex. Also required for correct spindle orientation. Does not appear to be required for the removal of spindle assembly checkpoint (SAC) proteins from the kinetochore upon bipolar spindle attachment. Acts as an adapter protein linking the dynein motor complex to various cargos and converts dynein from a non-processive to a highly processive motor in the presence of dynactin. Facilitates the interaction between dynein and dynactin and activates dynein processivity (the ability to move along a microtubule for a long distance without falling off the track). Plays a role in cell migration. In Bos taurus (Bovine), this protein is Protein Spindly.